The chain runs to 264 residues: 3-methyl-2-oxobutanoate hydroxymethyltransferase (264 aa).

2 residues coordinate Mg(2+): D45 and D84. 3-methyl-2-oxobutanoate contacts are provided by residues D45–S46, D84, and K112. A Mg(2+)-binding site is contributed by E114. E181 serves as the catalytic Proton acceptor.

The protein belongs to the PanB family. In terms of assembly, homodecamer; pentamer of dimers. Mg(2+) serves as cofactor.

It is found in the cytoplasm. It carries out the reaction 3-methyl-2-oxobutanoate + (6R)-5,10-methylene-5,6,7,8-tetrahydrofolate + H2O = 2-dehydropantoate + (6S)-5,6,7,8-tetrahydrofolate. It functions in the pathway cofactor biosynthesis; (R)-pantothenate biosynthesis; (R)-pantoate from 3-methyl-2-oxobutanoate: step 1/2. Catalyzes the reversible reaction in which hydroxymethyl group from 5,10-methylenetetrahydrofolate is transferred onto alpha-ketoisovalerate to form ketopantoate. This chain is 3-methyl-2-oxobutanoate hydroxymethyltransferase, found in Shewanella oneidensis (strain ATCC 700550 / JCM 31522 / CIP 106686 / LMG 19005 / NCIMB 14063 / MR-1).